Reading from the N-terminus, the 188-residue chain is Pro-adrenomedullin (188 aa).

The first 21 residues, 1-21, serve as a signal peptide directing secretion; sequence MKLVPVALLYLGSLAFLGVDT. R41 carries the post-translational modification Arginine amide. A propeptide spanning residues 45-92 is cleaved from the precursor; the sequence is ELRESSSYPTGLADVKAGPVQTLIRPQDVKGASRSPQASSPDAARIRV. A disordered region spans residues 69–89; that stretch reads RPQDVKGASRSPQASSPDAAR. The cysteines at positions 110 and 115 are disulfide-linked. The segment at 129–175 is disordered; the sequence is DKDKDGSAPRSKISPQGYGRRRRRSLPEAGLGRTLLQPPEPKLRGAP. Position 146 is a tyrosine amide (Y146). A propeptide spans 153-188 (preproAM C-terminal fragment); sequence SLPEAGLGRTLLQPPEPKLRGAPDSRVHQVLATLRI.

Belongs to the adrenomedullin family.

It localises to the secreted. Its function is as follows. Adrenomedullin/ADM and proadrenomedullin N-20 terminal peptide/PAMP are peptide hormones that act as potent hypotensive and vasodilatator agents. Numerous actions have been reported most related to the physiologic control of fluid and electrolyte homeostasis. In terms of biological role, ADM function is mediated by the CALCRL-RAMP2 and CALCRL-RAMP3 receptor complexes with ADM showing the highest potency for the CALCRL-RAMP2 complex. The protein is Pro-adrenomedullin (ADM) of Bos taurus (Bovine).